The chain runs to 178 residues: Gamma-crystallin S (178 aa).

At serine 2 the chain carries N-acetylserine. The interval 2–5 (SKSV) is N-terminal arm. Beta/gamma crystallin 'Greek key' domains follow at residues 6–44 (AKIT…RVTG) and 45–87 (GAWV…KVIH). A connecting peptide region spans residues 88 to 93 (LSSGGQ). Beta/gamma crystallin 'Greek key' domains are found at residues 94–134 (YKLQ…KVLD) and 135–177 (GVWV…RRIM).

It belongs to the beta/gamma-crystallin family. In terms of assembly, monomer.

Functionally, crystallins are the dominant structural components of the vertebrate eye lens. The polypeptide is Gamma-crystallin S (CRYGS) (Macropus fuliginosus (Western gray kangaroo)).